Here is a 374-residue protein sequence, read N- to C-terminus: P2Y purinoceptor 2 (374 aa).

At 1-32 (MAAGLDSWNSTINGTWEGDELGYKCRFNEDFK) the chain is on the extracellular side. 2 N-linked (GlcNAc...) asparagine glycosylation sites follow: N9 and N13. Residues 33 to 59 (YVLLPVSYGVVCVLGLCLNVVALYIFL) form a helical membrane-spanning segment. Residues 60–70 (CRLKTWNASTT) are Cytoplasmic-facing. The chain crosses the membrane as a helical span at residues 71–93 (YMFHLAVSDSLYAASLPLLVYYY). Residues 94 to 110 (AQGDHWPFSTVLCKLVR) lie on the Extracellular side of the membrane. A disulfide bridge links C106 with C183. The chain crosses the membrane as a helical span at residues 111 to 129 (FLFYTNLYCSILFLTCISV). At 130–152 (HRCLGVLRPLHSLSWGHARYARR) the chain is on the cytoplasmic side. A helical transmembrane segment spans residues 153–172 (VAAVVWVLVLACQAPVLYFV). The Extracellular segment spans residues 173-194 (TTSVRGTRITCHDTSARELFSH). Residues 195-220 (FVAYSSVMLGLLFAVPFSIILVCYVL) traverse the membrane as a helical segment. Over 221 to 245 (MARRLLKPAYGTTGLPRAKRKSVRT) the chain is Cytoplasmic. A helical transmembrane segment spans residues 246-268 (IALVLAVFALCFLPFHVTRTLYY). Residues 269-286 (SFRSLDLSCHTLNAINMA) are Extracellular-facing. Residues 287–308 (YKITRPLASANSCLDPVLYFLA) form a helical membrane-spanning segment. Topologically, residues 309 to 374 (GQRLVRFARD…AGSETKDIRL (66 aa)) are cytoplasmic. The disordered stretch occupies residues 318–374 (DAKPATEPTPSPQARRKLGLHRPNRTDTVRKDLSISSDDSRRTESTPAGSETKDIRL). The span at 331–340 (ARRKLGLHRP) shows a compositional bias: basic residues. Basic and acidic residues predominate over residues 341–361 (NRTDTVRKDLSISSDDSRRTE).

Belongs to the G-protein coupled receptor 1 family.

It localises to the cell membrane. Receptor for ATP and UTP coupled to G-proteins that activate a phosphatidylinositol-calcium second messenger system. The affinity range is UTP = ATP &gt; ATP-gamma-S &gt;&gt; 2-methylthio-ATP = ADP. The sequence is that of P2Y purinoceptor 2 (P2ry2) from Rattus norvegicus (Rat).